The chain runs to 1313 residues: Mitogen-activated protein kinase kinase kinase 15 (1313 aa).

The interval 1–58 (MESGGGNAPAGALGAASESPQCPPPPGVEGAAGPAEPDGAAEGAAGGSGEGESGGGPR) is disordered. The span at 28 to 43 (VEGAAGPAEPDGAAEG) shows a compositional bias: low complexity. Gly residues predominate over residues 44–57 (AAGGSGEGESGGGP). One can recognise a Protein kinase domain in the interval 652 to 908 (NGERVVLGKG…TAELLREGFL (257 aa)). ATP contacts are provided by residues 658 to 666 (LGKGTYGIV) and Lys-681. Asp-773 (proton acceptor) is an active-site residue. The interval 939-958 (EPMATSSSEHGSVSPDSDAQ) is disordered. The span at 942–955 (ATSSSEHGSVSPDS) shows a compositional bias: polar residues. Ser-994 carries the phosphoserine modification. A coiled-coil region spans residues 1179 to 1225 (QLGELRQETNRLLEHLVEKEREYQNLLRQTLEQKTQELYHLQLKLKS).

Belongs to the protein kinase superfamily. STE Ser/Thr protein kinase family. MAP kinase kinase kinase subfamily. The cofactor is Mg(2+). As to expression, isoform 2 and isoform 3 are widely expressed. Isoform 2 highest levels are observed in fetal brain, and isoform 3 highest levels in pancreas, peripheral blood leukocytes, fetal brain and spleen.

The enzyme catalyses L-seryl-[protein] + ATP = O-phospho-L-seryl-[protein] + ADP + H(+). It carries out the reaction L-threonyl-[protein] + ATP = O-phospho-L-threonyl-[protein] + ADP + H(+). With respect to regulation, contains an N-terminal autoinhibitory domain. Activated by phosphorylation at Thr-812, inhibited by phosphorylation at Ser-924 and Ser-994. In terms of biological role, serine/threonine kinase which acts as a component of the MAP kinase signal transduction pathway. Once activated, acts as an upstream activator of the p38 MAPK signal transduction cascade through the phosphorylation and activation of several MAP kinase kinases. May function in a signal transduction pathway that is activated by various cell stresses and leads to apoptosis. Involved in phosphorylation of WNK4 in response to osmotic stress or hypotonic low-chloride stimulation via the p38 MAPK signal transduction cascade. This chain is Mitogen-activated protein kinase kinase kinase 15 (MAP3K15), found in Homo sapiens (Human).